An 82-amino-acid polypeptide reads, in one-letter code: Small ribosomal subunit protein bS16 (82 aa).

Belongs to the bacterial ribosomal protein bS16 family.

This Crocosphaera subtropica (strain ATCC 51142 / BH68) (Cyanothece sp. (strain ATCC 51142)) protein is Small ribosomal subunit protein bS16.